Here is a 247-residue protein sequence, read N- to C-terminus: Capsid protein (247 aa).

A Bipartite nuclear localization signal motif is present at residues 1–28; that stretch reads MSGALKRKRSDEVAWSRRRPVKKPVRRA. A disordered region spans residues 1 to 39; it reads MSGALKRKRSDEVAWSRRRPVKKPVRRAPPPRAGPSVRR. The segment covering 16-26 has biased composition (basic residues); sequence SRRRPVKKPVR.

This sequence belongs to the geminiviridae capsid protein family. As to quaternary structure, homomultimer. Interacts with the movement protein. Binds to single-stranded and double-stranded viral DNA.

It is found in the virion. The protein resides in the host nucleus. Encapsidates the viral genome into characteristic twinned ('geminate') particles. Binds the genomic viral ssDNA and shuttles it into and out of the cell nucleus. Plays a role in protection of the genome from degradation, virus acquisition and transmission by insect vectors, infectivity, and systemic movement. The CP of monopartite geminiviruses is absolutely essential for virus movement. In Megathyrsus maximus (PanSV), this protein is Capsid protein.